A 362-amino-acid polypeptide reads, in one-letter code: 3-dehydroquinate synthase (362 aa).

NAD(+) contacts are provided by residues 74–79 (DGEGYK), 108–112 (GVIGD), 132–133 (TT), K145, K154, and 172–175 (TLDT). Positions 187, 250, and 267 each coordinate Zn(2+).

Belongs to the sugar phosphate cyclases superfamily. Dehydroquinate synthase family. Co(2+) is required as a cofactor. The cofactor is Zn(2+). It depends on NAD(+) as a cofactor.

It localises to the cytoplasm. The enzyme catalyses 7-phospho-2-dehydro-3-deoxy-D-arabino-heptonate = 3-dehydroquinate + phosphate. It functions in the pathway metabolic intermediate biosynthesis; chorismate biosynthesis; chorismate from D-erythrose 4-phosphate and phosphoenolpyruvate: step 2/7. Its function is as follows. Catalyzes the conversion of 3-deoxy-D-arabino-heptulosonate 7-phosphate (DAHP) to dehydroquinate (DHQ). This Citrifermentans bemidjiense (strain ATCC BAA-1014 / DSM 16622 / JCM 12645 / Bem) (Geobacter bemidjiensis) protein is 3-dehydroquinate synthase.